Reading from the N-terminus, the 123-residue chain is MDYEFQRDLTGGILARFSMDHEAIGYWLNDEIQGDISLIDQILTEMDEVKGSEKQWQLIGKEYSLSIDDEEIMVRANTLHFETDDLEEGMSYYDNESIAFCGLDDFATMLQKYRLFILENRRS.

The protein belongs to the UPF0231 family.

The protein is UPF0231 protein PMI2039 of Proteus mirabilis (strain HI4320).